Reading from the N-terminus, the 275-residue chain is Release factor glutamine methyltransferase (275 aa).

Residues 114–118 (GTGSG), Asp-137, Trp-165, and Asn-180 each bind S-adenosyl-L-methionine. Residue 180–183 (NPPY) coordinates substrate.

It belongs to the protein N5-glutamine methyltransferase family. PrmC subfamily.

The enzyme catalyses L-glutaminyl-[peptide chain release factor] + S-adenosyl-L-methionine = N(5)-methyl-L-glutaminyl-[peptide chain release factor] + S-adenosyl-L-homocysteine + H(+). Its function is as follows. Methylates the class 1 translation termination release factors RF1/PrfA and RF2/PrfB on the glutamine residue of the universally conserved GGQ motif. The protein is Release factor glutamine methyltransferase of Xylella fastidiosa (strain Temecula1 / ATCC 700964).